A 212-amino-acid polypeptide reads, in one-letter code: Leucyl/phenylalanyl-tRNA--protein transferase (212 aa).

Belongs to the L/F-transferase family.

The protein resides in the cytoplasm. It carries out the reaction N-terminal L-lysyl-[protein] + L-leucyl-tRNA(Leu) = N-terminal L-leucyl-L-lysyl-[protein] + tRNA(Leu) + H(+). It catalyses the reaction N-terminal L-arginyl-[protein] + L-leucyl-tRNA(Leu) = N-terminal L-leucyl-L-arginyl-[protein] + tRNA(Leu) + H(+). The catalysed reaction is L-phenylalanyl-tRNA(Phe) + an N-terminal L-alpha-aminoacyl-[protein] = an N-terminal L-phenylalanyl-L-alpha-aminoacyl-[protein] + tRNA(Phe). In terms of biological role, functions in the N-end rule pathway of protein degradation where it conjugates Leu, Phe and, less efficiently, Met from aminoacyl-tRNAs to the N-termini of proteins containing an N-terminal arginine or lysine. This is Leucyl/phenylalanyl-tRNA--protein transferase from Allorhizobium ampelinum (strain ATCC BAA-846 / DSM 112012 / S4) (Agrobacterium vitis (strain S4)).